We begin with the raw amino-acid sequence, 552 residues long: DnaJ homolog subfamily C member 1 (552 aa).

A signal peptide spans 1-43 (MWVPGFGSARLPQRRRSGLESSSVRPLWLLLLFLLAAVRPVRA). Topologically, residues 44–149 (WESGDLELFD…RRVRKMSNAE (106 aa)) are lumenal. The 74-residue stretch at 56–129 (EEVQLNFYEF…RYDDVLINGL (74 aa)) folds into the J domain. Residues 150–170 (LALLLFIILTVGHYAVVWSIY) traverse the membrane as a helical segment. Over 171–552 (LEKQLDELLG…LVQKKKQAKS (382 aa)) the chain is Cytoplasmic. The SANT 1 domain occupies 323 to 377 (RQAPEWTEEDLSQLTRSMVKFPGGTPGRWDKIAHELGRSVTDVTTKAKELKDSVT). Positions 370-495 (KELKDSVTSS…ERTRAAEEAW (126 aa)) are disordered. At Ser-379 the chain carries Phosphoserine. A compositionally biased stretch (acidic residues) spans 419–431 (MEDEEHEAAEGEQ). The span at 453–470 (TRVEPEEKLRGKRQKDFD) shows a compositional bias: basic and acidic residues. 2 positions are modified to phosphoserine: Ser-477 and Ser-478. Positions 480-492 (EEKQRKERTRAAE) are enriched in basic and acidic residues. The SANT 2 domain occupies 490 to 545 (AAEEAWTQSQQKLLELALQQYPKGASDRWDKIAKCVPSKSKEDCIARYKLLVELVQ).

Interacts (via J domain) with HSPA5. Interacts (via cytosolic domain) with ribosomes. Interacts (via SANT 2 domain) with SERPINA3; the interaction delays the formation of the covalent inhibitory complex SERPINA3-chymotrypsin, but does not alter the catalytic activity of SERPINA3. Interacts (via SANT 2 domain) with ITIH4 (via C-terminus); the interaction protects ITIH4 against in vitro cleavage by kallikrein. In terms of tissue distribution, widely expressed.

The protein resides in the endoplasmic reticulum membrane. Its subcellular location is the nucleus membrane. It is found in the microsome membrane. In terms of biological role, may modulate protein synthesis. In Mus musculus (Mouse), this protein is DnaJ homolog subfamily C member 1 (Dnajc1).